Here is a 372-residue protein sequence, read N- to C-terminus: MTALNHTPLNAAHRALNARMVDFGGWDMPVNYGSQIEEHAAVRTDAGMFDVSHMCVVDFTGSRVRAFFEHAIANNVGKLKTPGKALYSCLLNPQGGVIDDLIVYYFTEEFFRVVVNAGTADKDIAWFNQLNEQGGYGLTIAPRRDFAIVAVQGPNAREKVWATVPSARAATSELKPFNAAQVAGTPFGDLTIARTGYTGEDGFEVIVPAVHVEVLWNALQQHGVRPCGLGARDTLRLEAGMNLYGQDMDDTVSPLDAGLAWTVDLAAPRDFVGRAALEANGTRAAFVGLILQKENGKAGGVLRAHQKVVTPHGEGEITSGTFSPSMQESIAFARVPAAVQIGDTVQVQIRDKNLPARVVKLPFVRNGKVLAA.

Belongs to the GcvT family. The glycine cleavage system is composed of four proteins: P, T, L and H.

It catalyses the reaction N(6)-[(R)-S(8)-aminomethyldihydrolipoyl]-L-lysyl-[protein] + (6S)-5,6,7,8-tetrahydrofolate = N(6)-[(R)-dihydrolipoyl]-L-lysyl-[protein] + (6R)-5,10-methylene-5,6,7,8-tetrahydrofolate + NH4(+). Functionally, the glycine cleavage system catalyzes the degradation of glycine. This chain is Aminomethyltransferase, found in Burkholderia cenocepacia (strain ATCC BAA-245 / DSM 16553 / LMG 16656 / NCTC 13227 / J2315 / CF5610) (Burkholderia cepacia (strain J2315)).